Here is a 339-residue protein sequence, read N- to C-terminus: UDP-N-acetylglucosamine--N-acetylmuramyl-(pentapeptide) pyrophosphoryl-undecaprenol N-acetylglucosamine transferase (339 aa).

UDP-N-acetyl-alpha-D-glucosamine-binding positions include 9–11, asparagine 119, arginine 160, serine 188, and glutamine 280; that span reads TGG.

The protein belongs to the glycosyltransferase 28 family. MurG subfamily.

The protein resides in the cell inner membrane. The enzyme catalyses di-trans,octa-cis-undecaprenyl diphospho-N-acetyl-alpha-D-muramoyl-L-alanyl-D-glutamyl-meso-2,6-diaminopimeloyl-D-alanyl-D-alanine + UDP-N-acetyl-alpha-D-glucosamine = di-trans,octa-cis-undecaprenyl diphospho-[N-acetyl-alpha-D-glucosaminyl-(1-&gt;4)]-N-acetyl-alpha-D-muramoyl-L-alanyl-D-glutamyl-meso-2,6-diaminopimeloyl-D-alanyl-D-alanine + UDP + H(+). It participates in cell wall biogenesis; peptidoglycan biosynthesis. Cell wall formation. Catalyzes the transfer of a GlcNAc subunit on undecaprenyl-pyrophosphoryl-MurNAc-pentapeptide (lipid intermediate I) to form undecaprenyl-pyrophosphoryl-MurNAc-(pentapeptide)GlcNAc (lipid intermediate II). The polypeptide is UDP-N-acetylglucosamine--N-acetylmuramyl-(pentapeptide) pyrophosphoryl-undecaprenol N-acetylglucosamine transferase (Thermus thermophilus (strain ATCC BAA-163 / DSM 7039 / HB27)).